The chain runs to 503 residues: Lanosterol 14-alpha demethylase (503 aa).

Residues 24–44 (GNLLSTLLIACAFTLSLVYLF) form a helical membrane-spanning segment. A heme-binding site is contributed by cysteine 449.

The protein belongs to the cytochrome P450 family. It depends on heme as a cofactor. In terms of processing, ubiquitinated by MARCHF6, leading to proteasomal degradation.

Its subcellular location is the endoplasmic reticulum membrane. The protein localises to the microsome membrane. The catalysed reaction is a 14alpha-methyl steroid + 3 reduced [NADPH--hemoprotein reductase] + 3 O2 = a Delta(14) steroid + formate + 3 oxidized [NADPH--hemoprotein reductase] + 4 H2O + 4 H(+). The enzyme catalyses lanosterol + 3 reduced [NADPH--hemoprotein reductase] + 3 O2 = 4,4-dimethyl-5alpha-cholesta-8,14,24-trien-3beta-ol + formate + 3 oxidized [NADPH--hemoprotein reductase] + 4 H2O + 4 H(+). It catalyses the reaction 24,25-dihydrolanosterol + 3 reduced [NADPH--hemoprotein reductase] + 3 O2 = 4,4-dimethyl-8,14-cholestadien-3beta-ol + formate + 3 oxidized [NADPH--hemoprotein reductase] + 4 H2O + 4 H(+). It carries out the reaction a 14alpha-methyl steroid + reduced [NADPH--hemoprotein reductase] + O2 = a 14alpha-hydroxymethyl steroid + oxidized [NADPH--hemoprotein reductase] + H2O + H(+). The catalysed reaction is a 14alpha-hydroxymethyl steroid + reduced [NADPH--hemoprotein reductase] + O2 = a 14alpha-formyl steroid + oxidized [NADPH--hemoprotein reductase] + 2 H2O + H(+). The enzyme catalyses a 14alpha-formyl steroid + reduced [NADPH--hemoprotein reductase] + O2 = a Delta(14) steroid + formate + oxidized [NADPH--hemoprotein reductase] + H2O + 2 H(+). It catalyses the reaction lanosterol + reduced [NADPH--hemoprotein reductase] + O2 = 32-hydroxylanosterol + oxidized [NADPH--hemoprotein reductase] + H2O + H(+). It carries out the reaction 32-hydroxylanosterol + reduced [NADPH--hemoprotein reductase] + O2 = 32-oxolanosterol + oxidized [NADPH--hemoprotein reductase] + 2 H2O + H(+). The catalysed reaction is 32-oxolanosterol + reduced [NADPH--hemoprotein reductase] + O2 = 4,4-dimethyl-5alpha-cholesta-8,14,24-trien-3beta-ol + formate + oxidized [NADPH--hemoprotein reductase] + H2O + 2 H(+). The enzyme catalyses 24,25-dihydrolanosterol + reduced [NADPH--hemoprotein reductase] + O2 = 32-hydroxy-24,25-dihydrolanosterol + oxidized [NADPH--hemoprotein reductase] + H2O + H(+). It catalyses the reaction 32-hydroxy-24,25-dihydrolanosterol + reduced [NADPH--hemoprotein reductase] + O2 = 32-oxo-24,25-dihydrolanosterol + oxidized [NADPH--hemoprotein reductase] + 2 H2O + H(+). It carries out the reaction 32-oxo-24,25-dihydrolanosterol + reduced [NADPH--hemoprotein reductase] + O2 = 4,4-dimethyl-8,14-cholestadien-3beta-ol + formate + oxidized [NADPH--hemoprotein reductase] + H2O + 2 H(+). It functions in the pathway steroid biosynthesis; zymosterol biosynthesis; zymosterol from lanosterol: step 1/6. Its activity is regulated as follows. Inhibited by azalanstat. Inhibited by azole antifungal agents ketoconazole, itraconazole and fluconazole. Functionally, sterol 14alpha-demethylase that plays a critical role in the cholesterol biosynthesis pathway, being cholesterol the major sterol component in mammalian membranes as well as a precursor for bile acid and steroid hormone synthesis. Cytochrome P450 monooxygenase that catalyzes the three-step oxidative removal of the 14alpha-methyl group (C-32) of sterols such as lanosterol (lanosta-8,24-dien-3beta-ol) and 24,25-dihydrolanosterol (DHL) in the form of formate, and converts the sterols to 4,4-dimethyl-5alpha-cholesta-8,14,24-trien-3beta-ol and 4,4-dimethyl-8,14-cholestadien-3beta-ol, respectively, which are intermediates of cholesterol biosynthesis. Can also demethylate substrates not intrinsic to mammals, such as eburicol (24-methylene-24,25-dihydrolanosterol), but at a lower rate than DHL. This chain is Lanosterol 14-alpha demethylase, found in Rattus norvegicus (Rat).